Reading from the N-terminus, the 1100-residue chain is Beta-alanine-activating enzyme (1100 aa).

The tract at residues 162–181 (HKVTDREDRVSAESRTPEKE) is disordered. ATP contacts are provided by residues 197–205 (TSGTTGTPK), Asp427, Arg441, and Lys526. The 81-residue stretch at 552–632 (EELWGKLQYL…DVYNHIVQAV (81 aa)) folds into the Carrier domain. The residue at position 591 (Ser591) is an O-(pantetheine 4'-phosphoryl)serine. A disordered region spans residues 643 to 671 (SYTTKRKFSDADPEEASGKPARLESAWPS). Ser651 bears the Phosphoserine mark.

It belongs to the ATP-dependent AMP-binding enzyme family.

Functionally, covalently binds beta-alanine in an ATP-dependent manner to form a thioester bond with its phosphopantetheine group and transfers it to an as yet unknown acceptor via an amide bond. May be required for a post-translational protein modification or for post-transcriptional modification of an RNA. The polypeptide is Beta-alanine-activating enzyme (Aasdh) (Mus musculus (Mouse)).